A 668-amino-acid polypeptide reads, in one-letter code: Potassium voltage-gated channel subfamily KQT member 1 (668 aa).

Residues 1–119 (MDTASSPPSA…YNFLERPTGW (119 aa)) lie on the Cytoplasmic side of the membrane. S27 is subject to Phosphoserine; by PKA. Residues 120 to 141 (KCFVYHFTVFLIVLVCLIFSVL) form a helical membrane-spanning segment. The Extracellular portion of the chain corresponds to 142–152 (STIEQYAALAT). The helical transmembrane segment at 153 to 175 (GTLFWMEIVLVVFFGTEYVVRLW) threads the bilayer. The Cytoplasmic segment spans residues 176–191 (SAGCRSKYVGIWGRLR). A helical membrane pass occupies residues 192-217 (FARKPISIIDLIVVVASMVVLCVGSK). The Extracellular portion of the chain corresponds to 218 to 225 (GQVFATSA). Residues 226–241 (IRGIRFLQILRMLHVD) form a helical; Voltage-sensor membrane-spanning segment. Residues 237 to 245 (MLHVDRQGG) are interaction with KCNE3. Over 242–259 (RQGGTWRLLGSVVFIHRQ) the chain is Cytoplasmic. Q243 provides a ligand contact to a 1,2-diacyl-sn-glycero-3-phospho-(1D-myo-inositol-4,5-bisphosphate). The helical transmembrane segment at 260–282 (ELITTLYIGFLGLIFSSYFVYLA) threads the bilayer. The Extracellular segment spans residues 283 to 298 (EKDAVNESGRIEFGSY). Residue N288 is glycosylated (N-linked (GlcNAc...) asparagine). An intramembrane region (pore-forming) is located at residues 299–319 (ADALWWGVVTVTTIGYGDKVP). The Extracellular segment spans residues 320 to 321 (QT). A helical membrane pass occupies residues 322 to 347 (WVGKTIASCFSVFAISFFALPAGILG). The Cytoplasmic segment spans residues 348-668 (SGFALKVQQK…VPQTGPDEGS (321 aa)). The tract at residues 369–381 (AAASLIQTAWRCY) is interaction with CALM. Residues S406 and S408 each carry the phosphoserine modification. Residues 514-528 (KVIRRMQYFVAKKKF) form an interaction with CALM; calcium-dependent region. The interval 534-571 (PYDVRDVIEQYSQGHLNLMVRIKELQRRLDQSIGKPSL) is interaction with KCNE1 C-terminus. Residues 584–620 (SNTIGARLNRVEDKVTQLDQRLVIITDMLHQLLSMQQ) adopt a coiled-coil conformation. The interaction with AKAP9 stretch occupies residues 587–615 (IGARLNRVEDKVTQLDQRLVIITDMLHQL). Residues 588 to 619 (GARLNRVEDKVTQLDQRLVIITDMLHQLLSMQ) are C-terminal assembly domain (tetramerization).

This sequence belongs to the potassium channel family. KQT (TC 1.A.1.15) subfamily. Kv7.1/KCNQ1 sub-subfamily. As to quaternary structure, tetramer. Heterotetramer with KCNE1; form the native cardiac channel I(Ks) which increases the amplitude and slows down the activation kinetics of outward potassium current and targets to the membrane raft. Interacts (via C-terminus) with CALM; forms a heterooctameric structure (with 4:4 KCNQ1:CALM stoichiometry) in a calcium-independent manner. Interacts with AKAP9; targets protein kinase A (PKA) catalytic and regulatory subunits and protein phosphatase 1 (PP1) to the KCNQ1-KCNE1 complex, allowing PKA-mediated phosphorylation and increase of delayed rectifier potassium channel activity. Interacts with KCNE2; form an heterooligomer complex that targets to the membrane raft and leading to currents with an apparently instantaneous activation, a rapid deactivation process and a linear current-voltage relationship and decreases the amplitude of the outward current. Interacts with AP2M1; mediates estrogen-induced internalization via clathrin-coated vesicles. Interacts with NEDD4L; promotes internalization and decreases I(Ks) currents. Interacts with USP2; counteracts the NEDD4L-specific down-regulation of I(Ks) and restore plasma membrane localization. Heterotetramer with KCNQ5; has a voltage-gated potassium channel activity. Interacts with KCNE3; four KCNE3 molecules are bound to one KCNQ1 tetramer (4:4 KCNQ1:KCNE3 stoichiometry); alters membrane raft localization; affects KCNQ1 structure and gating properties. Interacts with KCNE4; impairs KCNQ1 localization in lipid rafts and inhibits voltage-gated potassium channel activity. Interacts with KCNE5; impairs KCNQ1 localization in lipid rafts and only conducts current upon strong and continued depolarization. Interacts with SLC5A3; forms coregulatory channel-transporter complexes that modulate Na(+)-coupled myo-inositol influx through the transporter. Phosphorylation at Ser-27 by PKA; increases delayed rectifier potassium channel activity of the KCNQ1-KCNE1 complex through a macromolecular complex that includes PKA, PP1, and the targeting protein AKAP9. Post-translationally, ubiquitinated by NEDD4L; promotes internalization. The ubiquitinylated form is internalized through a clathrin-mediated endocytosis by interacting with AP2M1 and is recycled back to the cell membrane via RAB4A and RAB11A. In terms of processing, deubiquitinated by USP2; counteracts the NEDD4L-specific down-regulation of I(Ks) and restores the membrane localization. Expressed in heart, kidney and salivary glands. Detected in the cochlea. Almost undetectable in brain, skeletal muscle and liver. Widely expressed in embryonic and neonatal tissues. Expressed in choroid plexus epithelium (at protein level).

The protein localises to the cell membrane. It localises to the cytoplasmic vesicle membrane. The protein resides in the early endosome. Its subcellular location is the membrane raft. It is found in the endoplasmic reticulum. The protein localises to the basolateral cell membrane. It localises to the apical cell membrane. The enzyme catalyses K(+)(in) = K(+)(out). PIP2 molecule is essential to activate KCNQ channels by inducing the coupling of the voltage-sensing domain (VSD) and the pore-forming domain (PD). Upon channel activation, PIP2 disrupts the VSD-calmodulin/CALM interactions, causing the release of CALM from the VSD which triggers the opening of the gate. Calcium potentiates KCNQ1 channel current through calcium-bound CALM. Calcium-bound CALM competes with PIP2 to stabilize the channel open state. Pore-forming subunit of the voltage-gated potassium (Kv) channel involved in the regulation of cardiomyocyte excitability and important in normal development and functions of myocardium, inner ear, stomach and colon. Associates with KCNE beta subunits that modulates current kinetics. Induces a voltage-dependent by rapidly activating and slowly deactivating potassium-selective outward current. Also promotes a delayed voltage activated potassium current showing outward rectification characteristic. During beta-adrenergic receptor stimulation participates in cardiac increases the amplitude and slows down the activation kinetics of outward potassium current I(Ks). Muscarinic agonist oxotremorine-M strongly suppresses KCNQ1/KCNE1 current. When associated with KCNE3, forms the potassium channel that is important for cyclic AMP-stimulated intestinal secretion of chloride ions. This interaction with KCNE3 is reduced by 17beta-estradiol, resulting in the reduction of currents. During conditions of increased substrate load, maintains the driving force for proximal tubular and intestinal sodium ions absorption, gastric acid secretion, and cAMP-induced jejunal chloride ions secretion. Allows the provision of potassium ions to the luminal membrane of the secretory canaliculus in the resting state as well as during stimulated acid secretion. When associated with KCNE2, forms a heterooligomer complex leading to currents with an apparently instantaneous activation, a rapid deactivation process and a linear current-voltage relationship and decreases the amplitude of the outward current. When associated with KCNE4, inhibits voltage-gated potassium channel activity. When associated with KCNE5, this complex only conducts current upon strong and continued depolarization. Also forms a heterotetramer with KCNQ5; has a voltage-gated potassium channel activity. Binds with phosphatidylinositol 4,5-bisphosphate. KCNQ1-KCNE2 channel associates with Na(+)-coupled myo-inositol symporter in the apical membrane of choroid plexus epithelium and regulates the myo-inositol gradient between blood and cerebrospinal fluid with an impact on neuron excitability. This is Potassium voltage-gated channel subfamily KQT member 1 from Mus musculus (Mouse).